The chain runs to 904 residues: Dual specificity tyrosine-phosphorylation-regulated kinase mbk-1 (904 aa).

3 disordered regions span residues 1-151, 250-272, and 285-345; these read MNSG…MPPE, TVGR…ASSS, and AVPN…YNNG. Positions 9–23 are enriched in polar residues; the sequence is NLQAWGQQPSSSYSN. Residues 24-35 show a composition bias toward low complexity; it reads TQQQHGQITGQI. Positions 59-75 are enriched in basic and acidic residues; sequence ELEKSKKIAEQPTEHPQ. Over residues 112–123 the composition is skewed to low complexity; it reads NNSNSQNFFPQQ. Residues 286–297 show a composition bias toward polar residues; sequence VPNTSSSGNQPH. The Protein kinase domain occupies 367 to 690; sequence ILSDTPVGKG…TLFPVSHTAY (324 aa). ATP-binding positions include 373 to 381 and lysine 396; that span reads VGKGSFGQV. The Proton acceptor role is filled by aspartate 495. Disordered regions lie at residues 717 to 830 and 881 to 904; these read YRPV…DQAE and MSHG…NNKL. A compositionally biased stretch (polar residues) spans 721–733; that stretch reads PTSSHPISVTSSF. Residues 749–820 are compositionally biased toward low complexity; sequence SQQNYHNPNY…VQQHSSSSSR (72 aa). Residues 881-890 are compositionally biased toward polar residues; it reads MSHGNVNAGS. The segment covering 892-904 has biased composition (basic and acidic residues); the sequence is RDMEKHDYPNNKL.

It belongs to the protein kinase superfamily. CMGC Ser/Thr protein kinase family. MNB/DYRK subfamily. It depends on Mg(2+) as a cofactor.

The protein resides in the nucleus. The enzyme catalyses L-seryl-[protein] + ATP = O-phospho-L-seryl-[protein] + ADP + H(+). It catalyses the reaction L-threonyl-[protein] + ATP = O-phospho-L-threonyl-[protein] + ADP + H(+). It carries out the reaction L-tyrosyl-[protein] + ATP = O-phospho-L-tyrosyl-[protein] + ADP + H(+). Its function is as follows. Possible role in the function of olfactory neurons. In Caenorhabditis briggsae, this protein is Dual specificity tyrosine-phosphorylation-regulated kinase mbk-1.